Reading from the N-terminus, the 281-residue chain is Probable splicing factor, arginine/serine-rich 2 (281 aa).

The 71-residue stretch at 2–72 folds into the RRM 1 domain; it reads VRVYIGRLPN…ERVILEFPRR (71 aa). Basic and acidic residues-rich tracts occupy residues 78-97 and 168-190; these read EERS…KGGE and KLQG…DRSR. Disordered stretches follow at residues 78–100 and 168–281; these read EERS…ERQF and KLQG…SASP. The RRM 2 domain occupies 112 to 186; it reads FRLVIDNLST…RKLKCTDETR (75 aa). Positions 191–215 are enriched in basic residues; the sequence is SRSPRRRSRSRSPTRSRSPPARRRS. Basic and acidic residues predominate over residues 216-225; the sequence is PGSDRSDRKS. The segment covering 245 to 254 has biased composition (basic residues); that stretch reads RSRSGGRRSR.

The protein belongs to the splicing factor SR family. Extensively phosphorylated on serine residues in the RS domain.

It is found in the nucleus. Its function is as follows. Plays a functionally redundant role in spermatogenesis and growth rate control. Required for the development of somatic gonad structures and for progression from larval stage to adulthood. The protein is Probable splicing factor, arginine/serine-rich 2 (rsp-2) of Caenorhabditis elegans.